A 323-amino-acid polypeptide reads, in one-letter code: Digestive cysteine proteinase 2 (323 aa).

The first 16 residues, 1–16 (MKVAVLFLCGVALAAA), serve as a signal peptide directing secretion. Positions 17 to 107 (SPSWEHFKGK…FYPKKETGPQ (91 aa)) are cleaved as a propeptide — activation peptide. 3 disulfides stabilise this stretch: cysteine 128–cysteine 171, cysteine 162–cysteine 204, and cysteine 263–cysteine 312. Residue cysteine 131 is part of the active site. Residues histidine 270 and asparagine 290 contribute to the active site.

Belongs to the peptidase C1 family.

Inhibited by E-64, antipain, leupeptin, heavy metal ions, iodoacetic acid, dithionitrobenzene, p-hydroxymercuri-benzoate; activated by mercaptoethanol and dithiothreitol. The sequence is that of Digestive cysteine proteinase 2 (LCP2) from Homarus americanus (American lobster).